A 529-amino-acid polypeptide reads, in one-letter code: Peptide chain release factor 3 (529 aa).

The tr-type G domain occupies 11-280 (AKRRTFAIIS…GLVEWAPAPM (270 aa)). Residues 20–27 (SHPDAGKT), 88–92 (DTPGH), and 142–145 (NKLD) contribute to the GTP site.

The protein belongs to the TRAFAC class translation factor GTPase superfamily. Classic translation factor GTPase family. PrfC subfamily.

It is found in the cytoplasm. Increases the formation of ribosomal termination complexes and stimulates activities of RF-1 and RF-2. It binds guanine nucleotides and has strong preference for UGA stop codons. It may interact directly with the ribosome. The stimulation of RF-1 and RF-2 is significantly reduced by GTP and GDP, but not by GMP. This chain is Peptide chain release factor 3, found in Shigella dysenteriae serotype 1 (strain Sd197).